Reading from the N-terminus, the 468-residue chain is Squamosa promoter-binding-like protein 5 (468 aa).

The SBP-type zinc finger occupies proline 204–proline 281. The Zn(2+) site is built by cysteine 207, cysteine 212, cysteine 229, histidine 232, cysteine 248, cysteine 251, histidine 255, and cysteine 267. The short motif at lysine 264–lysine 280 is the Bipartite nuclear localization signal element. Disordered stretches follow at residues arginine 270 to isoleucine 305, threonine 354 to leucine 374, and histidine 405 to asparagine 458. Over residues glutamine 363–glycine 372 the composition is skewed to acidic residues. The span at asparagine 438–asparagine 458 shows a compositional bias: low complexity.

Ubiquitous.

It localises to the nucleus. Trans-acting factor that binds specifically to the consensus nucleotide sequence 5'-TNCGTACAA-3'. The chain is Squamosa promoter-binding-like protein 5 (SPL5) from Oryza sativa subsp. japonica (Rice).